The sequence spans 224 residues: MVEVRYLGHSAVLLTDGKTRIVIDPFLTGNPMAALGVGEVQADLILVTHAHGDHFGDSVALSKKGGVVVSTFEIATYAEKHGAKSVPMNLGGTYRFEGGWLKWVPAWHSSSFPDGTYGGMPMGVVVELGGKRIYHAGDTALFSDMRLIGEMGLDLALLPIGDHFTMGPEDALKALELLRPKKVVPIHYNTFPPIRQDGEAFAQRAREKGVEGHALKPGEVLRLD.

It belongs to the UPF0173 family.

This chain is UPF0173 metal-dependent hydrolase TTHA1283, found in Thermus thermophilus (strain ATCC 27634 / DSM 579 / HB8).